The primary structure comprises 49 residues: Large ribosomal subunit protein bL33 (49 aa).

Belongs to the bacterial ribosomal protein bL33 family.

This chain is Large ribosomal subunit protein bL33, found in Syntrophobacter fumaroxidans (strain DSM 10017 / MPOB).